The chain runs to 25 residues: Fibrinolytic enzyme large subunit (25 aa).

The region spanning 1 to 25 (VIGGTNASPGEIPWQLSQQRQSGSW) is the Peptidase S1 domain. The segment at 1–25 (VIGGTNASPGEIPWQLSQQRQSGSW) is disordered. Positions 15 to 25 (QLSQQRQSGSW) are enriched in polar residues.

This sequence belongs to the peptidase S1 family. In terms of assembly, heterodimer of a large and a small subunit held together by hydrophobic interactions.

Cleaves the carboxyl side of basic amino acids, small neutral amino acids, and Met residue. It is also a plasminogen activator. This Eisenia fetida (Red wiggler worm) protein is Fibrinolytic enzyme large subunit.